We begin with the raw amino-acid sequence, 223 residues long: F420-dependent NADP reductase (223 aa).

NADP(+) contacts are provided by residues 9 to 12, 30 to 31, lysine 35, leucine 75, and valine 101; these read TGDQ and SR.

This sequence belongs to the F420-dependent NADP reductase family.

It catalyses the reaction reduced coenzyme F420-(gamma-L-Glu)(n) + NADP(+) = oxidized coenzyme F420-(gamma-L-Glu)(n) + NADPH + 2 H(+). In terms of biological role, catalyzes the reduction of NADP(+) with F420H(2) via hydride transfer, and the reverse reaction, i.e. the reduction of F420 with NADPH. Probably functions in the regeneration of NADPH required in biosynthetic reactions. This Methanocaldococcus jannaschii (strain ATCC 43067 / DSM 2661 / JAL-1 / JCM 10045 / NBRC 100440) (Methanococcus jannaschii) protein is F420-dependent NADP reductase (fno).